The primary structure comprises 95 residues: DNA-directed RNA polymerase subunit Rpo11 (95 aa).

The protein belongs to the archaeal Rpo11/eukaryotic RPB11/RPC19 RNA polymerase subunit family. As to quaternary structure, part of the RNA polymerase complex.

It localises to the cytoplasm. The catalysed reaction is RNA(n) + a ribonucleoside 5'-triphosphate = RNA(n+1) + diphosphate. DNA-dependent RNA polymerase (RNAP) catalyzes the transcription of DNA into RNA using the four ribonucleoside triphosphates as substrates. The protein is DNA-directed RNA polymerase subunit Rpo11 of Thermococcus onnurineus (strain NA1).